We begin with the raw amino-acid sequence, 340 residues long: TD and POZ domain-containing protein 5 (340 aa).

Residues 19–149 (EFCYVWTIRN…ENKLTLCCKV (131 aa)) form the MATH domain. The region spanning 188–255 (TDCCLLVAGH…IYTGKAPHLQ (68 aa)) is the BTB domain.

Belongs to the Tdpoz family.

The protein is TD and POZ domain-containing protein 5 of Mus musculus (Mouse).